Reading from the N-terminus, the 396-residue chain is Elongation factor Tu 2 (396 aa).

Residues 10–206 (KPHVNVGTIG…AIDSYIPEPE (197 aa)) form the tr-type G domain. A G1 region spans residues 19 to 26 (GHIDHGKT). 19 to 26 (GHIDHGKT) serves as a coordination point for GTP. Thr26 is a Mg(2+) binding site. Residues 60–64 (GITIA) form a G2 region. Residues 81-84 (DCPG) form a G3 region. GTP-binding positions include 81–85 (DCPGH) and 136–139 (NKCD). The interval 136 to 139 (NKCD) is G4. The tract at residues 174 to 176 (SAL) is G5.

Belongs to the TRAFAC class translation factor GTPase superfamily. Classic translation factor GTPase family. EF-Tu/EF-1A subfamily. Monomer.

The protein localises to the cytoplasm. The catalysed reaction is GTP + H2O = GDP + phosphate + H(+). Its function is as follows. GTP hydrolase that promotes the GTP-dependent binding of aminoacyl-tRNA to the A-site of ribosomes during protein biosynthesis. The chain is Elongation factor Tu 2 from Desulfotalea psychrophila (strain LSv54 / DSM 12343).